The primary structure comprises 380 residues: Glutamyl-tRNA reductase 1 (380 aa).

Substrate-binding positions include 42–45, Ser93, 98–100, and Gln104; these read TCNR and ETD. The active-site Nucleophile is Cys43. An NADP(+)-binding site is contributed by 172-177; the sequence is GAGAVG.

Belongs to the glutamyl-tRNA reductase family. Homodimer.

It catalyses the reaction (S)-4-amino-5-oxopentanoate + tRNA(Glu) + NADP(+) = L-glutamyl-tRNA(Glu) + NADPH + H(+). It functions in the pathway porphyrin-containing compound metabolism; protoporphyrin-IX biosynthesis; 5-aminolevulinate from L-glutamyl-tRNA(Glu): step 1/2. Its function is as follows. Catalyzes the NADPH-dependent reduction of glutamyl-tRNA(Glu) to glutamate 1-semialdehyde (GSA). The polypeptide is Glutamyl-tRNA reductase 1 (Pyrobaculum calidifontis (strain DSM 21063 / JCM 11548 / VA1)).